Reading from the N-terminus, the 255-residue chain is Taurine import ATP-binding protein TauB (255 aa).

Positions Leu-2–Ser-229 constitute an ABC transporter domain. Gly-34–Thr-41 contributes to the ATP binding site.

It belongs to the ABC transporter superfamily. Taurine importer (TC 3.A.1.17.1) family. In terms of assembly, the complex is composed of two ATP-binding proteins (TauB), two transmembrane proteins (TauC) and a solute-binding protein (TauA).

Its subcellular location is the cell inner membrane. The catalysed reaction is taurine(out) + ATP + H2O = taurine(in) + ADP + phosphate + H(+). In terms of biological role, part of the ABC transporter complex TauABC involved in taurine import. Responsible for energy coupling to the transport system. This is Taurine import ATP-binding protein TauB from Shigella dysenteriae serotype 1 (strain Sd197).